We begin with the raw amino-acid sequence, 210 residues long: Na(+)-translocating NADH-quinone reductase subunit D (210 aa).

5 consecutive transmembrane segments (helical) span residues 42–62, 72–92, 103–123, 131–151, and 178–198; these read FVMT…VSVI, IIVQ…ILKA, VFVG…AFAM, LIDG…VGFF, and NGLM…IWAI.

This sequence belongs to the NqrDE/RnfAE family. In terms of assembly, composed of six subunits; NqrA, NqrB, NqrC, NqrD, NqrE and NqrF.

Its subcellular location is the cell inner membrane. The catalysed reaction is a ubiquinone + n Na(+)(in) + NADH + H(+) = a ubiquinol + n Na(+)(out) + NAD(+). Functionally, NQR complex catalyzes the reduction of ubiquinone-1 to ubiquinol by two successive reactions, coupled with the transport of Na(+) ions from the cytoplasm to the periplasm. NqrA to NqrE are probably involved in the second step, the conversion of ubisemiquinone to ubiquinol. This Vibrio vulnificus (strain YJ016) protein is Na(+)-translocating NADH-quinone reductase subunit D.